Here is a 120-residue protein sequence, read N- to C-terminus: Large ribosomal subunit protein uL18 (120 aa).

The protein belongs to the universal ribosomal protein uL18 family. In terms of assembly, part of the 50S ribosomal subunit; part of the 5S rRNA/L5/L18/L25 subcomplex. Contacts the 5S and 23S rRNAs.

This is one of the proteins that bind and probably mediate the attachment of the 5S RNA into the large ribosomal subunit, where it forms part of the central protuberance. This chain is Large ribosomal subunit protein uL18, found in Rhizobium johnstonii (strain DSM 114642 / LMG 32736 / 3841) (Rhizobium leguminosarum bv. viciae).